The sequence spans 151 residues: Large ribosomal subunit protein uL15 (151 aa).

The interval 1-51 is disordered; the sequence is MPLKIEDLKPTPGSRKPKKRLGRGIGSGLGKTAGKGHKGEKARGRGKIGRT. Over residues 23–33 the composition is skewed to gly residues; that stretch reads RGIGSGLGKTA.

Belongs to the universal ribosomal protein uL15 family. Part of the 50S ribosomal subunit.

Functionally, binds to the 23S rRNA. The chain is Large ribosomal subunit protein uL15 from Petrotoga mobilis (strain DSM 10674 / SJ95).